A 159-amino-acid polypeptide reads, in one-letter code: MIAIYPGRFDPVTLGHLSVARRASGFCDRLIIAVFDNPAKPGLFTAAERVDFIKQSIKDFPNVEVRSFSGLMVNFARKMGASLIIRGLRVGADFEREMEMYVMNRRLDEGIELCCLFSEPQYQYLSASLIKEIVILGGDSSGLISEHVAVALKNKLASV.

Histidine 16 is a binding site for ATP. Substrate is bound by residues lysine 40, methionine 72, and arginine 86. Residues 87 to 89 (GLR), glutamate 97, and 122 to 128 (YQYLSAS) each bind ATP.

It belongs to the bacterial CoaD family. As to quaternary structure, homohexamer. Mg(2+) serves as cofactor.

Its subcellular location is the cytoplasm. The enzyme catalyses (R)-4'-phosphopantetheine + ATP + H(+) = 3'-dephospho-CoA + diphosphate. It functions in the pathway cofactor biosynthesis; coenzyme A biosynthesis; CoA from (R)-pantothenate: step 4/5. Its function is as follows. Reversibly transfers an adenylyl group from ATP to 4'-phosphopantetheine, yielding dephospho-CoA (dPCoA) and pyrophosphate. The sequence is that of Phosphopantetheine adenylyltransferase from Dehalococcoides mccartyi (strain CBDB1).